The following is a 150-amino-acid chain: Peptide deformylase 2 (150 aa).

Positions 89 and 131 each coordinate Fe cation. Residue Glu132 is part of the active site. His135 contacts Fe cation.

The protein belongs to the polypeptide deformylase family. The cofactor is Fe(2+).

It carries out the reaction N-terminal N-formyl-L-methionyl-[peptide] + H2O = N-terminal L-methionyl-[peptide] + formate. Removes the formyl group from the N-terminal Met of newly synthesized proteins. Requires at least a dipeptide for an efficient rate of reaction. N-terminal L-methionine is a prerequisite for activity but the enzyme has broad specificity at other positions. In Clostridium acetobutylicum (strain ATCC 824 / DSM 792 / JCM 1419 / IAM 19013 / LMG 5710 / NBRC 13948 / NRRL B-527 / VKM B-1787 / 2291 / W), this protein is Peptide deformylase 2.